We begin with the raw amino-acid sequence, 473 residues long: Photosystem II CP43 reaction center protein (473 aa).

The propeptide occupies 1 to 14 (MKTLYSLRRFYPVE). Thr15 carries the post-translational modification N-acetylthreonine. Residue Thr15 is modified to Phosphothreonine. A run of 5 helical transmembrane segments spans residues 69 to 93 (LFEV…PHLA), 134 to 155 (LLGP…KDRN), 178 to 200 (KALY…RKIT), 255 to 275 (KPFA…LSYS), and 291 to 312 (WFNN…ASQA). Residue Glu367 participates in [CaMn4O5] cluster binding. Residues 447–471 (RARAAAAGFEKGIDRDFEPVLSMTP) traverse the membrane as a helical segment.

This sequence belongs to the PsbB/PsbC family. PsbC subfamily. PSII is composed of 1 copy each of membrane proteins PsbA, PsbB, PsbC, PsbD, PsbE, PsbF, PsbH, PsbI, PsbJ, PsbK, PsbL, PsbM, PsbT, PsbX, PsbY, PsbZ, Psb30/Ycf12, at least 3 peripheral proteins of the oxygen-evolving complex and a large number of cofactors. It forms dimeric complexes. It depends on Binds multiple chlorophylls and provides some of the ligands for the Ca-4Mn-5O cluster of the oxygen-evolving complex. It may also provide a ligand for a Cl- that is required for oxygen evolution. PSII binds additional chlorophylls, carotenoids and specific lipids. as a cofactor.

It localises to the plastid. The protein localises to the chloroplast thylakoid membrane. Functionally, one of the components of the core complex of photosystem II (PSII). It binds chlorophyll and helps catalyze the primary light-induced photochemical processes of PSII. PSII is a light-driven water:plastoquinone oxidoreductase, using light energy to abstract electrons from H(2)O, generating O(2) and a proton gradient subsequently used for ATP formation. The polypeptide is Photosystem II CP43 reaction center protein (Gossypium hirsutum (Upland cotton)).